A 216-amino-acid polypeptide reads, in one-letter code: Chloramphenicol acetyltransferase (216 aa).

The active-site Proton acceptor is the H189.

Belongs to the chloramphenicol acetyltransferase family. As to quaternary structure, homotrimer.

The catalysed reaction is chloramphenicol + acetyl-CoA = chloramphenicol 3-acetate + CoA. This enzyme is an effector of chloramphenicol resistance in bacteria. The chain is Chloramphenicol acetyltransferase (cat) from Staphylococcus aureus.